The primary structure comprises 100 residues: Large ribosomal subunit protein uL23 (100 aa).

The protein belongs to the universal ribosomal protein uL23 family. As to quaternary structure, part of the 50S ribosomal subunit. Contacts protein L29, and trigger factor when it is bound to the ribosome.

One of the early assembly proteins it binds 23S rRNA. One of the proteins that surrounds the polypeptide exit tunnel on the outside of the ribosome. Forms the main docking site for trigger factor binding to the ribosome. This Aeromonas salmonicida (strain A449) protein is Large ribosomal subunit protein uL23.